The following is a 241-amino-acid chain: GTP cyclohydrolase 1 type 2 homolog (241 aa).

A divalent metal cation is bound by residues His62, His63, Asp101, His207, and Glu211.

The protein belongs to the GTP cyclohydrolase I type 2/NIF3 family. In terms of assembly, homohexamer.

This chain is GTP cyclohydrolase 1 type 2 homolog, found in Campylobacter jejuni subsp. jejuni serotype O:2 (strain ATCC 700819 / NCTC 11168).